A 430-amino-acid chain; its full sequence is Enolase (430 aa).

A (2R)-2-phosphoglycerate-binding site is contributed by Gln-162. Glu-204 (proton donor) is an active-site residue. Mg(2+) contacts are provided by Asp-242, Glu-289, and Asp-316. The (2R)-2-phosphoglycerate site is built by Lys-341, Arg-370, Ser-371, and Lys-392. The active-site Proton acceptor is Lys-341.

It belongs to the enolase family. Requires Mg(2+) as cofactor.

Its subcellular location is the cytoplasm. The protein localises to the secreted. It localises to the cell surface. The enzyme catalyses (2R)-2-phosphoglycerate = phosphoenolpyruvate + H2O. The protein operates within carbohydrate degradation; glycolysis; pyruvate from D-glyceraldehyde 3-phosphate: step 4/5. Functionally, catalyzes the reversible conversion of 2-phosphoglycerate (2-PG) into phosphoenolpyruvate (PEP). It is essential for the degradation of carbohydrates via glycolysis. This chain is Enolase, found in Flavobacterium johnsoniae (strain ATCC 17061 / DSM 2064 / JCM 8514 / BCRC 14874 / CCUG 350202 / NBRC 14942 / NCIMB 11054 / UW101) (Cytophaga johnsonae).